The following is a 398-amino-acid chain: tRNA-specific 2-thiouridylase MnmA (398 aa).

Residues 33 to 40 (GMSGGVDS) and M59 each bind ATP. The tract at residues 119–121 (NPD) is interaction with target base in tRNA. The Nucleophile role is filled by C124. C124 and C226 form a disulfide bridge. G148 lines the ATP pocket. Positions 176 to 178 (KDQ) are interaction with tRNA. C226 functions as the Cysteine persulfide intermediate in the catalytic mechanism. Positions 343-344 (RY) are interaction with tRNA.

Belongs to the MnmA/TRMU family.

It is found in the cytoplasm. The enzyme catalyses S-sulfanyl-L-cysteinyl-[protein] + uridine(34) in tRNA + AH2 + ATP = 2-thiouridine(34) in tRNA + L-cysteinyl-[protein] + A + AMP + diphosphate + H(+). Its function is as follows. Catalyzes the 2-thiolation of uridine at the wobble position (U34) of tRNA, leading to the formation of s(2)U34. The polypeptide is tRNA-specific 2-thiouridylase MnmA (Psychrobacter sp. (strain PRwf-1)).